Here is a 351-residue protein sequence, read N- to C-terminus: Rhodopsin (351 aa).

Residues 1–36 lie on the Extracellular side of the membrane; the sequence is MNGTEGQDFYVPMSNKTGVVRSPFEYPQYYLAEPWK. Asn-2 and Asn-15 each carry an N-linked (GlcNAc...) asparagine glycan. The helical transmembrane segment at 37 to 61 threads the bilayer; sequence FSALAAYMFMLILLGFPVNFLTLYV. At 62-73 the chain is on the cytoplasmic side; that stretch reads TIQHKKLRTPLN. A helical membrane pass occupies residues 74–96; that stretch reads YILLNLVVADLFMVFGGFTTTMY. The Extracellular segment spans residues 97-110; sequence TSMNGYFVFGVTGC. A disulfide bond links Cys-110 and Cys-187. The chain crosses the membrane as a helical span at residues 111 to 133; sequence YIEGFFATLGGEIALWSLVVLAV. The 'Ionic lock' involved in activated form stabilization signature appears at 134 to 136; that stretch reads ERY. The Cytoplasmic segment spans residues 134 to 152; the sequence is ERYVVVCKPMSNFRFGENH. A helical transmembrane segment spans residues 153–173; sequence AIMGVAFSWIMAMACAAPPLF. The Extracellular segment spans residues 174–202; sequence GWSRYIPEGMQCSCGIDYYTLKPEINNES. The chain crosses the membrane as a helical span at residues 203 to 224; it reads FVIYMFVVHFMIPLAVIFFCYG. Topologically, residues 225 to 252 are cytoplasmic; the sequence is NLVCTVKEAAAQQQESATTQKAEKEVTR. The chain crosses the membrane as a helical span at residues 253 to 274; it reads MVIIMVIAFLICWVPYASVAFY. The Extracellular segment spans residues 275-286; the sequence is IFTNQGSDFGPI. A helical membrane pass occupies residues 287–308; sequence FMTIPAFFAKSSAIYNPVIYIV. At Lys-296 the chain carries N6-(retinylidene)lysine. At 309 to 351 the chain is on the cytoplasmic side; the sequence is MNKQFRNCMITTLCCGKNPLGDEDTSAGKTETSSVSTSQVSPA. Residues Cys-322 and Cys-323 are each lipidated (S-palmitoyl cysteine). Residues 331-351 form a disordered region; it reads EDTSAGKTETSSVSTSQVSPA. The span at 340–351 shows a compositional bias: low complexity; that stretch reads TSSVSTSQVSPA. At Ser-341 the chain carries Phosphoserine; by RK and GRK7.

The protein belongs to the G-protein coupled receptor 1 family. Opsin subfamily. Contains one covalently linked retinal chromophore. Upon light absorption, the covalently bound 11-cis-retinal is converted to all-trans-retinal. After hydrolysis of the Schiff base and release of the covalently bound all-trans-retinal, active rhodopsin is regenerated by binding of a fresh molecule of 11-cis-retinal.

The protein resides in the membrane. The protein localises to the cell projection. It localises to the cilium. It is found in the photoreceptor outer segment. Functionally, photoreceptor required for image-forming vision at low light intensity. Required for photoreceptor cell viability after birth. Light-induced isomerization of 11-cis to all-trans retinal triggers a conformational change that activates signaling via G-proteins. Subsequent receptor phosphorylation mediates displacement of the bound G-protein alpha subunit by arrestin and terminates signaling. The polypeptide is Rhodopsin (RHO) (Gallus gallus (Chicken)).